Reading from the N-terminus, the 264-residue chain is Small ribosomal subunit protein uS3 (264 aa).

Residues 39–107 (VREYLKKKLK…PVHVNIEEIR (69 aa)) form the KH type-2 domain. The interval 217–264 (EEVAEEKRPRRNARPGDRRPRRDGEGAPAGARRGAPRRGGAGDGKTGE) is disordered. A compositionally biased stretch (basic and acidic residues) spans 230–241 (RPGDRRPRRDGE). The segment covering 253 to 264 (RRGGAGDGKTGE) has biased composition (gly residues).

The protein belongs to the universal ribosomal protein uS3 family. Part of the 30S ribosomal subunit. Forms a tight complex with proteins S10 and S14.

In terms of biological role, binds the lower part of the 30S subunit head. Binds mRNA in the 70S ribosome, positioning it for translation. The protein is Small ribosomal subunit protein uS3 of Paraburkholderia phymatum (strain DSM 17167 / CIP 108236 / LMG 21445 / STM815) (Burkholderia phymatum).